The following is a 322-amino-acid chain: ATP-dependent 6-phosphofructokinase 1 (322 aa).

G11 is an ATP binding site. 21-25 (RAVVR) is a binding site for ADP. Residues 72-73 (RS) and 102-105 (GDGT) each bind ATP. Mg(2+) is bound at residue D103. 126–128 (TID) is a binding site for substrate. D128 serves as the catalytic Proton acceptor. R155 provides a ligand contact to ADP. Residues R163 and 170–172 (MGR) each bind substrate. ADP-binding positions include 186–188 (GAE), R212, and 214–216 (KKS). Substrate-binding positions include E223, R246, and 252–255 (HIQR).

The protein belongs to the phosphofructokinase type A (PFKA) family. ATP-dependent PFK group I subfamily. Prokaryotic clade 'B1' sub-subfamily. Homotetramer. Mg(2+) is required as a cofactor.

It is found in the cytoplasm. It carries out the reaction beta-D-fructose 6-phosphate + ATP = beta-D-fructose 1,6-bisphosphate + ADP + H(+). Its pathway is carbohydrate degradation; glycolysis; D-glyceraldehyde 3-phosphate and glycerone phosphate from D-glucose: step 3/4. Its activity is regulated as follows. Allosterically activated by ADP and other diphosphonucleosides. Allosterically inhibited by phosphoenolpyruvate which induces the dissociation of the active tetramer into an inactive two-subunit forms. Functionally, catalyzes the phosphorylation of D-fructose 6-phosphate to fructose 1,6-bisphosphate by ATP, the first committing step of glycolysis. The sequence is that of ATP-dependent 6-phosphofructokinase 1 from Thermus thermophilus (strain ATCC 27634 / DSM 579 / HB8).